A 109-amino-acid polypeptide reads, in one-letter code: Large ribosomal subunit protein eL30 (109 aa).

Belongs to the eukaryotic ribosomal protein eL30 family. In terms of assembly, component of the large ribosomal subunit (LSU). Mature N.crassa ribosomes consist of a small (40S) and a large (60S) subunit. The 40S small subunit contains 1 molecule of ribosomal RNA (18S rRNA) and at least 32 different proteins. The large 60S subunit contains 3 rRNA molecules (26S, 5.8S and 5S rRNA) and at least 42 different proteins.

The protein localises to the cytoplasm. Its function is as follows. Component of the ribosome, a large ribonucleoprotein complex responsible for the synthesis of proteins in the cell. The small ribosomal subunit (SSU) binds messenger RNAs (mRNAs) and translates the encoded message by selecting cognate aminoacyl-transfer RNA (tRNA) molecules. The large subunit (LSU) contains the ribosomal catalytic site termed the peptidyl transferase center (PTC), which catalyzes the formation of peptide bonds, thereby polymerizing the amino acids delivered by tRNAs into a polypeptide chain. The nascent polypeptides leave the ribosome through a tunnel in the LSU and interact with protein factors that function in enzymatic processing, targeting, and the membrane insertion of nascent chains at the exit of the ribosomal tunnel. The polypeptide is Large ribosomal subunit protein eL30 (rpl-30) (Neurospora crassa (strain ATCC 24698 / 74-OR23-1A / CBS 708.71 / DSM 1257 / FGSC 987)).